Reading from the N-terminus, the 123-residue chain is ATP synthase epsilon chain (123 aa).

It belongs to the ATPase epsilon chain family. F-type ATPases have 2 components, CF(1) - the catalytic core - and CF(0) - the membrane proton channel. CF(1) has five subunits: alpha(3), beta(3), gamma(1), delta(1), epsilon(1). CF(0) has three main subunits: a, b and c.

The protein resides in the cell inner membrane. Its function is as follows. Produces ATP from ADP in the presence of a proton gradient across the membrane. The protein is ATP synthase epsilon chain of Helicobacter pylori (strain HPAG1).